The primary structure comprises 583 residues: SHC-transforming protein 1 (583 aa).

At methionine 1 the chain carries N-acetylmethionine. A disordered region spans residues 1–92; it reads MDLLPPKPKY…EPGRAADDGE (92 aa). Low complexity predominate over residues 16-44; the sequence is ESLSSLEEGASGSTPPEELPSPSASSLGP. A phosphoserine mark is found at serine 36 and serine 139. An N6-acetyllysine modification is found at lysine 154. In terms of domain architecture, PID spans 156–339; the sequence is MGPGVSYLVR…AGFDGSAWDE (184 aa). The tract at residues 340-487 is CH1; that stretch reads EEEEPPDHQY…SMAEQLRGEP (148 aa). Phosphotyrosine occurs at positions 349 and 350. Residues 372 to 384 show a composition bias toward low complexity; that stretch reads AAPGAARPTAPNA. The tract at residues 372–415 is disordered; it reads AAPGAARPTAPNAQTPSHLGATLPVGQPVGGDPEVRKQMPPPPP. Tyrosine 427 carries the phosphotyrosine modification. Serine 453 bears the Phosphoserine mark. An SH2 domain is found at 488–579; the sequence is WFHGKLSRRE…GSELCLQQPV (92 aa).

As to quaternary structure, interacts with CPNE3; this interaction may mediate the binding of CPNE3 with ERBB2. Interacts with the NPXY motif of tyrosine-phosphorylated IGF1R and INSR in vitro via the PID domain. Once activated, binds to GRB2. Interacts with tyrosine-phosphorylated CD3T and DDR2. Interacts with the N-terminal region of SH2B2. Interacts with phosphorylated LRP1 and IRS4. Interacts with INPP5D/SHIP1 and INPPL1/SHIP2. Interacts with TRIM31. Interacts with PTPN6/SHP (tyrosine phosphorylated). Identified in a complex containing FGFR4, NCAM1, CDH2, PLCG1, FRS2, SRC, SHC1, GAP43 and CTT. Interacts with ALK, GAB2, GRB7 and KIT. Interacts with FLT4 (tyrosine-phosphorylated). Interacts with EPHB1 and GRB2; activates the MAPK/ERK cascade to regulate cell migration. Interacts with PDGFRB (tyrosine-phosphorylated). Interacts with ERBB4. Interacts with TEK/TIE2 (tyrosine-phosphorylated). Interacts with the Trk receptors NTRK1, NTRK2 and NTRK3; in a phosphotyrosine-dependent manner. Interacts with PTK2/FAK1. Interacts with CEACAM1; this interaction is CEACAM1-phosphorylation-dependent and mediates interaction with EGFR or INSR resulting in decrease coupling of SHC1 to the MAPK3/ERK1-MAPK1/ERK2 pathway. Interacts (via PID domain) with PEAK1 (when phosphorylated at 'Tyr-1188'). Found in a complex with PPP1CA, PPP1CC, SHC1 and PEAK1. (Microbial infection) Interacts with herpes simplex virus 1 UL46. Phosphorylated by activated epidermal growth factor receptor. Phosphorylated in response to FLT4 and KIT signaling. Isoform p46Shc and isoform p52Shc are phosphorylated on tyrosine residues of the Pro-rich domain. Isoform p66Shc is phosphorylated on Ser-36 by PRKCB upon treatment with insulin, hydrogen peroxide or irradiation with ultraviolet light. Tyrosine phosphorylated in response to FLT3 signaling. Tyrosine phosphorylated by activated PTK2B/PYK2. Tyrosine phosphorylated by ligand-activated ALK. Tyrosine phosphorylated by ligand-activated PDGFRB. Tyrosine phosphorylated by TEK/TIE2. May be tyrosine phosphorylated by activated PTK2/FAK1; tyrosine phosphorylation was seen in an astrocytoma biopsy, where PTK2/FAK1 kinase activity is high, but not in normal brain tissue. Isoform p52Shc dephosphorylation by PTPN2 may regulate interaction with GRB2. Widely expressed. Expressed in neural stem cells but absent in mature neurons.

Its subcellular location is the cytoplasm. The protein localises to the cell junction. The protein resides in the focal adhesion. It localises to the mitochondrion matrix. It is found in the mitochondrion. In terms of biological role, signaling adapter that couples activated growth factor receptors to signaling pathways. Participates in a signaling cascade initiated by activated KIT and KITLG/SCF. Isoform p46Shc and isoform p52Shc, once phosphorylated, couple activated receptor tyrosine kinases to Ras via the recruitment of the GRB2/SOS complex and are implicated in the cytoplasmic propagation of mitogenic signals. Isoform p46Shc and isoform p52Shc may thus function as initiators of the Ras signaling cascade in various non-neuronal systems. Isoform p66Shc does not mediate Ras activation, but is involved in signal transduction pathways that regulate the cellular response to oxidative stress and life span. Isoform p66Shc acts as a downstream target of the tumor suppressor p53 and is indispensable for the ability of stress-activated p53 to induce elevation of intracellular oxidants, cytochrome c release and apoptosis. The expression of isoform p66Shc has been correlated with life span. Participates in signaling downstream of the angiopoietin receptor TEK/TIE2, and plays a role in the regulation of endothelial cell migration and sprouting angiogenesis. The polypeptide is SHC-transforming protein 1 (SHC1) (Homo sapiens (Human)).